The chain runs to 320 residues: Cytochrome f (320 aa).

Positions 1–35 (MQTRNTFSWIREEITRSISVSLIIYIITRASISSA) are cleaved as a signal peptide. The heme site is built by Tyr36, Cys56, Cys59, and His60. Residues 286–306 (VQGLLFFLASVVLAQIFLVLK) form a helical membrane-spanning segment.

This sequence belongs to the cytochrome f family. As to quaternary structure, the 4 large subunits of the cytochrome b6-f complex are cytochrome b6, subunit IV (17 kDa polypeptide, petD), cytochrome f and the Rieske protein, while the 4 small subunits are PetG, PetL, PetM and PetN. The complex functions as a dimer. The cofactor is heme.

It is found in the plastid. The protein localises to the chloroplast thylakoid membrane. Its function is as follows. Component of the cytochrome b6-f complex, which mediates electron transfer between photosystem II (PSII) and photosystem I (PSI), cyclic electron flow around PSI, and state transitions. The polypeptide is Cytochrome f (Draba nemorosa (Woodland whitlowgrass)).